Reading from the N-terminus, the 322-residue chain is uncharacterized protein (322 aa).

The Radical SAM core domain maps to 34–286 (KFKQKIFKIP…QRLSKDKVPE (253 aa)). The [4Fe-4S] cluster site is built by Cys-50, Cys-58, and Cys-61.

This sequence belongs to the radical SAM superfamily. It depends on [4Fe-4S] cluster as a cofactor.

This is an uncharacterized protein from Methanocaldococcus jannaschii (strain ATCC 43067 / DSM 2661 / JAL-1 / JCM 10045 / NBRC 100440) (Methanococcus jannaschii).